The following is a 298-amino-acid chain: DDRGK domain-containing protein 1 (298 aa).

Residues 1–21 (MDIVLYFVAVPILIVLIVSAV) form a helical membrane-spanning segment. Over 22-298 (KVRGKTEEDN…NLIPEIHNTA (277 aa)) the chain is Cytoplasmic. Positions 71–149 (NSAYREAADN…EERRKEDKKE (79 aa)) are disordered. Acidic residues predominate over residues 82–94 (SPVEVEEEYEEAE). Over residues 110–149 (KLEEKQAKRAQREAELEEREERKRTQELREEERRKEDKKE) the composition is skewed to basic and acidic residues. The UFM1-interacting motif (UFIM) signature appears at 181 to 195 (SFVVEEQGEADELTE). The 45-residue stretch at 215 to 259 (VLLEDLASHFGLRTQDAISRLQDLLSDGSITGVIDDRGKFIFITP) folds into the PCI domain.

This sequence belongs to the DDRGK1 family. As to quaternary structure, component of the UFM1 ribosome E3 ligase (UREL) complex, composed of ufl1, ddrgk1 and cdk5rap3.

It localises to the endoplasmic reticulum membrane. Functionally, component of the UFM1 ribosome E3 ligase (UREL) complex, a multiprotein complex that catalyzes ufmylation of endoplasmic reticulum-docked proteins. The UREL complex plays a key role in ribosome recycling by mediating mono-ufmylation of the RPL26/uL24 subunit of the 60S ribosome following ribosome dissociation: ufmylation weakens the junction between post-termination 60S subunits and SEC61 translocons, promoting release and recycling of the large ribosomal subunit from the endoplasmic reticulum membrane. Ufmylation of RPL26/uL24 and subsequent 60S ribosome recycling either take place after normal termination of translation or after ribosome stalling during cotranslational translocation at the endoplasmic reticulum. Within the UREL complex, DDRGK1 tethers the complex to the endoplasmic reticulum membrane to restrict its activity to endoplasmic reticulum-docked ribosomes and acts as an ufmylation 'reader': following RPL26/uL24 ufmylation, DDRGK1 specifically binds to ufmylated RPL26/uL24 via its UFIM motif, resulting in stable association between the 60S ribosome and the UREL complex, followed by dissociation of the 60S ribosome subunit from the endoplasmic reticulum membrane. The UREL complex is also involved in reticulophagy in response to endoplasmic reticulum stress by promoting ufmylation of proteins such as CYB5R3 and RPN1, thereby promoting lysosomal degradation of ufmylated proteins. Required for stabilization and ufmylation of ATG9A. The sequence is that of DDRGK domain-containing protein 1 from Osmerus mordax (Rainbow smelt).